We begin with the raw amino-acid sequence, 253 residues long: Triosephosphate isomerase (253 aa).

8–10 (NWK) serves as a coordination point for substrate. Histidine 91 serves as the catalytic Electrophile. Glutamate 168 serves as the catalytic Proton acceptor. Substrate contacts are provided by residues glycine 174, serine 213, and 234 to 235 (GG).

It belongs to the triosephosphate isomerase family. In terms of assembly, homodimer.

Its subcellular location is the cytoplasm. The catalysed reaction is D-glyceraldehyde 3-phosphate = dihydroxyacetone phosphate. Its pathway is carbohydrate biosynthesis; gluconeogenesis. The protein operates within carbohydrate degradation; glycolysis; D-glyceraldehyde 3-phosphate from glycerone phosphate: step 1/1. Involved in the gluconeogenesis. Catalyzes stereospecifically the conversion of dihydroxyacetone phosphate (DHAP) to D-glyceraldehyde-3-phosphate (G3P). The polypeptide is Triosephosphate isomerase (Acidiphilium cryptum (strain JF-5)).